We begin with the raw amino-acid sequence, 78 residues long: GNELLEAGEECDCGTPGNPCCDAATCKLRPGAQCAEGLCCDQCRFMKEGTVCRIARGDDMDDYCNGISAGCPRNPFHA.

Positions 1 to 78 (GNELLEAGEE…AGCPRNPFHA (78 aa)) constitute a Disintegrin domain. 6 cysteine pairs are disulfide-bonded: Cys11–Cys26, Cys13–Cys21, Cys20–Cys43, Cys34–Cys40, Cys39–Cys64, and Cys52–Cys71. Positions 56-58 (RGD) match the Cell attachment site motif.

The protein belongs to the venom metalloproteinase (M12B) family. P-II subfamily. P-IIa sub-subfamily. In terms of assembly, monomer. As to expression, expressed by the venom gland.

The protein localises to the secreted. In terms of biological role, this recombinant disintegrin antagonizes integrins alpha-IIb/beta-3 (ITGA2B/ITGB3) and alpha-V/beta-3 (ITGAV/ITGB3). On ITGA2B/ITGB3, it interferes with the outside/-in phosphorylation of the focal adhesion kinase (PTK2 / FAK) downstream of the integrin. It strongly inhibits platelet aggregation induced by ADP, thrombin, and collagen, abolishes and reverses dynamic platelet recruitment to immobilized fibrinogen. In vivo, it induces a dramatic increase in the tail bleeding time, and has a strong antithrombotic activity. On ITGAV/ITGB3, it inhibits the adhesion of ITGAV/ITGB3-expressing human microvascular endothelial cell line and murine melanoma cell line to vitronectin (IC(50) are 555 nM and 225 nM, respectively), and transiently inhibits their proliferation without direct cell toxicity. In vivo, it potently inhibits angiogenesis and metastasis, probably due to its capability to strongly inhibit the expression of VEGF and its receptors in endothelial cells. It also inhibits tumor cell migration in vitro. The chain is Disintegrin DisBa-01 from Bothrops alternatus (Urutu).